A 221-amino-acid chain; its full sequence is ATP phosphoribosyltransferase (221 aa).

This sequence belongs to the ATP phosphoribosyltransferase family. Short subfamily. In terms of assembly, heteromultimer composed of HisG and HisZ subunits.

The protein localises to the cytoplasm. It carries out the reaction 1-(5-phospho-beta-D-ribosyl)-ATP + diphosphate = 5-phospho-alpha-D-ribose 1-diphosphate + ATP. It functions in the pathway amino-acid biosynthesis; L-histidine biosynthesis; L-histidine from 5-phospho-alpha-D-ribose 1-diphosphate: step 1/9. Catalyzes the condensation of ATP and 5-phosphoribose 1-diphosphate to form N'-(5'-phosphoribosyl)-ATP (PR-ATP). Has a crucial role in the pathway because the rate of histidine biosynthesis seems to be controlled primarily by regulation of HisG enzymatic activity. This chain is ATP phosphoribosyltransferase, found in Carboxydothermus hydrogenoformans (strain ATCC BAA-161 / DSM 6008 / Z-2901).